The following is a 240-amino-acid chain: Ribonuclease HII (240 aa).

In terms of domain architecture, RNase H type-2 spans 29–220 (EPIAGVDEAG…VRRAAGLEPL (192 aa)). Residues Asp35, Glu36, and Asp129 each contribute to the a divalent metal cation site.

Belongs to the RNase HII family. Requires Mn(2+) as cofactor. The cofactor is Mg(2+).

It is found in the cytoplasm. The catalysed reaction is Endonucleolytic cleavage to 5'-phosphomonoester.. In terms of biological role, endonuclease that specifically degrades the RNA of RNA-DNA hybrids. The polypeptide is Ribonuclease HII (Nocardioides sp. (strain ATCC BAA-499 / JS614)).